The primary structure comprises 258 residues: MNTPLRVGIVGCGVLANAMAGHLARQPRPVEIVGCLVRDPGRARGALPCHGSWEALLAQRPEVVVECAGQAALAQYAQAILAAGVDLVPASVGALADDALRGALLEAAAAAGARIRIPSGAMVGIDGLAAARHVGVAEVLYRGTMPPVALQRYVSGPLPERGLAFAGSAREAVARFPKNANLTGTIALAGIGFDRTRVEMLIDPDATANVHELLARGEFGDFHARVSGLRISESSPSSRIVAGSLAQAALGSGFLALS.

Positions 121 and 181 each coordinate NAD(+). His-211 is an active-site residue.

Belongs to the L-aspartate dehydrogenase family.

It carries out the reaction L-aspartate + NADP(+) + H2O = oxaloacetate + NH4(+) + NADPH + H(+). The catalysed reaction is L-aspartate + NAD(+) + H2O = oxaloacetate + NH4(+) + NADH + H(+). Its pathway is cofactor biosynthesis; NAD(+) biosynthesis; iminoaspartate from L-aspartate (dehydrogenase route): step 1/1. Specifically catalyzes the NAD or NADP-dependent dehydrogenation of L-aspartate to iminoaspartate. This chain is L-aspartate dehydrogenase 1, found in Bordetella parapertussis (strain 12822 / ATCC BAA-587 / NCTC 13253).